Here is a 491-residue protein sequence, read N- to C-terminus: Acetyl-coenzyme A carboxylase carboxyl transferase subunit beta, chloroplastic (491 aa).

The CoA carboxyltransferase N-terminal domain maps to 224 to 491 (LWIQCENCYG…FFPLNPKKIK (268 aa)). Positions 228, 231, 247, and 250 each coordinate Zn(2+). The C4-type zinc finger occupies 228 to 250 (CENCYGLNYKKNLKSKINICEQC).

This sequence belongs to the AccD/PCCB family. Acetyl-CoA carboxylase is a heterohexamer composed of biotin carboxyl carrier protein, biotin carboxylase and 2 subunits each of ACCase subunit alpha and ACCase plastid-coded subunit beta (accD). Zn(2+) serves as cofactor.

The protein resides in the plastid. It localises to the chloroplast stroma. The catalysed reaction is N(6)-carboxybiotinyl-L-lysyl-[protein] + acetyl-CoA = N(6)-biotinyl-L-lysyl-[protein] + malonyl-CoA. It participates in lipid metabolism; malonyl-CoA biosynthesis; malonyl-CoA from acetyl-CoA: step 1/1. Functionally, component of the acetyl coenzyme A carboxylase (ACC) complex. Biotin carboxylase (BC) catalyzes the carboxylation of biotin on its carrier protein (BCCP) and then the CO(2) group is transferred by the transcarboxylase to acetyl-CoA to form malonyl-CoA. This is Acetyl-coenzyme A carboxylase carboxyl transferase subunit beta, chloroplastic from Vitis vinifera (Grape).